The primary structure comprises 146 residues: Hemoglobin subunit beta-1/2 (146 aa).

In terms of domain architecture, Globin spans 2–146; sequence EWTDKERSII…VVSALGKQYH (145 aa). Heme b-binding residues include H63 and H92.

The protein belongs to the globin family. As to quaternary structure, hb1 is a heterotetramer of two alpha-1 chains and two beta chains. Hb2 is a heterotetramer of two alpha-2 chains and two beta chains. As to expression, red blood cells.

In terms of biological role, involved in oxygen transport from gills to the various peripheral tissues. This chain is Hemoglobin subunit beta-1/2, found in Trematomus newnesi (Dusky notothen).